Here is a 200-residue protein sequence, read N- to C-terminus: 3-isopropylmalate dehydratase small subunit (200 aa).

This sequence belongs to the LeuD family. LeuD type 1 subfamily. As to quaternary structure, heterodimer of LeuC and LeuD.

It carries out the reaction (2R,3S)-3-isopropylmalate = (2S)-2-isopropylmalate. The protein operates within amino-acid biosynthesis; L-leucine biosynthesis; L-leucine from 3-methyl-2-oxobutanoate: step 2/4. Catalyzes the isomerization between 2-isopropylmalate and 3-isopropylmalate, via the formation of 2-isopropylmaleate. In Haemophilus influenzae (strain PittEE), this protein is 3-isopropylmalate dehydratase small subunit.